Consider the following 843-residue polypeptide: Elongation factor 2 (843 aa).

In terms of domain architecture, tr-type G spans 17-344 (HNIRNMSVIA…MMIFHLPSPH (328 aa)). GTP-binding positions include 26–33 (AHVDHGKS) and 158–161 (NKMD). Position 700 is a diphthamide (His-700). Phosphoserine is present on Ser-837.

It belongs to the TRAFAC class translation factor GTPase superfamily. Classic translation factor GTPase family. In terms of assembly, may interact with glutaredoxins (Grxs). Expressed in root, stem, leaves, flowers and siliques.

Its subcellular location is the cytoplasm. It carries out the reaction GTP + H2O = GDP + phosphate + H(+). The protein operates within protein biosynthesis; polypeptide chain elongation. Its function is as follows. Catalyzes the GTP-dependent ribosomal translocation step during translation elongation. During this step, the ribosome changes from the pre-translocational (PRE) to the post-translocational (POST) state as the newly formed A-site-bound peptidyl-tRNA and P-site-bound deacylated tRNA move to the P and E sites, respectively. Catalyzes the coordinated movement of the two tRNA molecules, the mRNA and conformational changes in the ribosome. Involved in cold responses leading to freezing tolerance via the induction of cold-responsive genes. This chain is Elongation factor 2, found in Arabidopsis thaliana (Mouse-ear cress).